The chain runs to 410 residues: uncharacterized protein (410 aa).

A Zn(2+)-binding site is contributed by histidine 87. Residue aspartate 89 is part of the active site. Aspartate 120 is a binding site for Zn(2+). The active-site Proton acceptor is the glutamate 154. Residues glutamate 155, aspartate 184, and histidine 387 each coordinate Zn(2+).

This sequence belongs to the peptidase M20A family. Requires Zn(2+) as cofactor. Co(2+) serves as cofactor.

This is an uncharacterized protein from Methanocaldococcus jannaschii (strain ATCC 43067 / DSM 2661 / JAL-1 / JCM 10045 / NBRC 100440) (Methanococcus jannaschii).